A 131-amino-acid chain; its full sequence is Large ribosomal subunit protein bL17 (131 aa).

This sequence belongs to the bacterial ribosomal protein bL17 family. In terms of assembly, part of the 50S ribosomal subunit. Contacts protein L32.

This is Large ribosomal subunit protein bL17 from Vesicomyosocius okutanii subsp. Calyptogena okutanii (strain HA).